Reading from the N-terminus, the 195-residue chain is MRTAQITRKTAETDISVEINLDGTGTYDNLTGVGFFDHMLDQLARHALMDMTVRCAGDLHIDDHHSVEDVGIALGQALTQAMGDKRGIRRYGECVLPMDDARVACALDLSGRPFLVWDVEMPTAKIGTFDTELVREFFQAFATHGGITLHLTQAAGVNSHHIAEAAFKATARALRDALEVDPRTADAIPSTKGSL.

The protein belongs to the imidazoleglycerol-phosphate dehydratase family.

The protein localises to the cytoplasm. It carries out the reaction D-erythro-1-(imidazol-4-yl)glycerol 3-phosphate = 3-(imidazol-4-yl)-2-oxopropyl phosphate + H2O. It functions in the pathway amino-acid biosynthesis; L-histidine biosynthesis; L-histidine from 5-phospho-alpha-D-ribose 1-diphosphate: step 6/9. The polypeptide is Imidazoleglycerol-phosphate dehydratase (Jannaschia sp. (strain CCS1)).